Reading from the N-terminus, the 379-residue chain is Cytochrome b (379 aa).

Transmembrane regions (helical) follow at residues 33 to 53, 77 to 98, 113 to 133, and 178 to 198; these read FGSLLGLCLISQILTGLFLAM, WLIRNLHANGASFFFICLYLHI, WNIGVVLFLLVMMTAFVGYVL, and FFAFHFLFPFVVAGATMLHLL. Positions 83 and 97 each coordinate heme b. Heme b-binding residues include histidine 182 and histidine 196. Histidine 201 is an a ubiquinone binding site. 4 helical membrane-spanning segments follow: residues 226 to 246, 288 to 308, 320 to 340, and 347 to 367; these read YKDLLGFIIMLTALTMLALFY, LGGVLALLSSILVLMVVPILH, ISQLLFWILVADMLVLTWIGG, and YIIIGQVASVLYFSLFLVLNP.

This sequence belongs to the cytochrome b family. In terms of assembly, the cytochrome bc1 complex contains 3 respiratory subunits (MT-CYB, CYC1 and UQCRFS1), 2 core proteins (UQCRC1 and UQCRC2) and probably 6 low-molecular weight proteins. It depends on heme b as a cofactor.

Its subcellular location is the mitochondrion inner membrane. Its function is as follows. Component of the ubiquinol-cytochrome c reductase complex (complex III or cytochrome b-c1 complex) that is part of the mitochondrial respiratory chain. The b-c1 complex mediates electron transfer from ubiquinol to cytochrome c. Contributes to the generation of a proton gradient across the mitochondrial membrane that is then used for ATP synthesis. In Anguilla mossambica (African longfin eel), this protein is Cytochrome b (mt-cyb).